Consider the following 537-residue polypeptide: uncharacterized protein (537 aa).

Disordered stretches follow at residues 1 to 33 (MEPG…ILAF), 71 to 98 (SSPP…RKRQ), 197 to 220 (SHNN…SEEK), and 516 to 537 (GRQR…EEQN). Serine 72 is modified (phosphoserine). Positions 88 to 98 (SRVDSEARKRQ) are enriched in basic and acidic residues. A compositionally biased stretch (polar residues) spans 197-214 (SHNNMASSNTQSNTQLSE). Residues 516–529 (GRQRSSRYKSHVHK) are compositionally biased toward basic residues.

It belongs to the NAD kinase family.

This is an uncharacterized protein from Schizosaccharomyces pombe (strain 972 / ATCC 24843) (Fission yeast).